The following is a 391-amino-acid chain: DNA polymerase IV (391 aa).

Residues 6 to 187 (IIHVDMDAFF…LPVEMLWGVG (182 aa)) form the UmuC domain. 2 residues coordinate Mg(2+): Asp-10 and Asp-105. Glu-106 is an active-site residue.

Belongs to the DNA polymerase type-Y family. Monomer. The cofactor is Mg(2+).

The protein resides in the cytoplasm. The enzyme catalyses DNA(n) + a 2'-deoxyribonucleoside 5'-triphosphate = DNA(n+1) + diphosphate. Poorly processive, error-prone DNA polymerase involved in untargeted mutagenesis. Copies undamaged DNA at stalled replication forks, which arise in vivo from mismatched or misaligned primer ends. These misaligned primers can be extended by PolIV. Exhibits no 3'-5' exonuclease (proofreading) activity. May be involved in translesional synthesis, in conjunction with the beta clamp from PolIII. The sequence is that of DNA polymerase IV from Carboxydothermus hydrogenoformans (strain ATCC BAA-161 / DSM 6008 / Z-2901).